The primary structure comprises 563 residues: Membrane protein insertase YidC (563 aa).

A helical transmembrane segment spans residues 6–26; it reads TVLWMIFSFSLLLLWNNWQIH. A disordered region spans residues 36–70; the sequence is PAPEAAATQQPKADANGTAASSTASIPSSPAAAPA. Residues 54 to 70 show a composition bias toward low complexity; the sequence is AASSTASIPSSPAAAPA. The next 4 helical transmembrane spans lie at 373–393, 443–463, 482–502, and 512–532; these read WGWTIVALTVIIKAVFFPLAA, LPMVVQIPVFIALYWVLLASV, PFFILPAIMMATMFLQIKLNP, and VMMIMPLVFGGMMFFFPAGLV.

It belongs to the OXA1/ALB3/YidC family. Type 1 subfamily. Interacts with the Sec translocase complex via SecD. Specifically interacts with transmembrane segments of nascent integral membrane proteins during membrane integration.

It localises to the cell inner membrane. Its function is as follows. Required for the insertion and/or proper folding and/or complex formation of integral membrane proteins into the membrane. Involved in integration of membrane proteins that insert both dependently and independently of the Sec translocase complex, as well as at least some lipoproteins. Aids folding of multispanning membrane proteins. This Bordetella parapertussis (strain 12822 / ATCC BAA-587 / NCTC 13253) protein is Membrane protein insertase YidC.